We begin with the raw amino-acid sequence, 240 residues long: MKPARVPQTVVAPDCWGDLPWGKLYRKALERQLNPWFTKMYGFHLLKIGNLSAEINCEACAVSHQVNVSAQGMPVQVQADPLHLPFADKSVDVCLLAHTLPWCTDPHRLLREADRVLIDDGWLVISGFNPISFMGLRKLVPVLRKTSPYNSRMFTLMRQLDWLSLLNFEVLHASRFHVLPWNKHGGKLLNAHIPALGCLQLIVARKRTIPLTLNPMKQSKNKPRIRQAVGATRQCRKPQA.

Residues 216–240 (MKQSKNKPRIRQAVGATRQCRKPQA) form a disordered region.

This is an uncharacterized protein from Escherichia coli (strain K12).